We begin with the raw amino-acid sequence, 315 residues long: Endolytic peptidoglycan transglycosylase RlpA (315 aa).

Positions 1-19 are cleaved as a signal peptide; that stretch reads MGLALEKVCFLGVIFLISA. Cysteine 20 carries N-palmitoyl cysteine lipidation. The S-diacylglycerol cysteine moiety is linked to residue cysteine 20. The segment covering 68–79 has biased composition (basic and acidic residues); that stretch reads SDSQDSNTKDQP. Positions 68–92 are disordered; sequence SDSQDSNTKDQPLDNGMRDSSSIQR. Residues 242 to 315 form the SPOR domain; that stretch reads SVSGGKFSLQ…YNQNAVLTRE (74 aa).

The protein belongs to the RlpA family.

It localises to the cell membrane. Functionally, lytic transglycosylase with a strong preference for naked glycan strands that lack stem peptides. This Helicobacter pylori (strain ATCC 700392 / 26695) (Campylobacter pylori) protein is Endolytic peptidoglycan transglycosylase RlpA.